The following is a 471-amino-acid chain: 5-hydroxytryptamine receptor 2A (471 aa).

The Extracellular portion of the chain corresponds to 1–80; sequence MEILCEDNIS…LQEKNWSALL (80 aa). Asn-8, Asn-38, Asn-44, Asn-51, and Asn-54 each carry an N-linked (GlcNAc...) asparagine glycan. A helical membrane pass occupies residues 81–97; sequence TTVVIILTIAGNILVIM. Over 98-111 the chain is Cytoplasmic; it reads AVSLEKKLQNATNY. The chain crosses the membrane as a helical span at residues 112–137; it reads FLMSLAIADMLLGFLVMPVSMLTILY. Over 138-146 the chain is Extracellular; sequence GYRWPLPSK. A helical membrane pass occupies residues 147-171; that stretch reads LCAVWIYLDVLFSTASIMHLCAISL. A disulfide bridge links Cys-148 with Cys-227. Asp-155 provides a ligand contact to serotonin. Residues 172–174 carry the DRY motif; important for ligand-induced conformation changes motif; sequence DRY. Residues 172-191 are Cytoplasmic-facing; that stretch reads DRYVAIQNPIHHSRFNSRTK. Residues 192–215 form a helical membrane-spanning segment; sequence AFLKIIAVWTISVGISMPIPVFGL. The Extracellular segment spans residues 216–232; the sequence is QDDSKVFKEGSCLLADD. The helical transmembrane segment at 233 to 258 threads the bilayer; the sequence is NFVLIGSFVAFFIPLTIMVITYFLTI. Residues 259–322 lie on the Cytoplasmic side of the membrane; it reads KSLQKEATLC…QSISNEQKAC (64 aa). Phosphoserine is present on Ser-280. The chain crosses the membrane as a helical span at residues 323–348; it reads KVLGIVFFLFVVMWCPFFITNIMAVI. Asn-343 is a binding site for serotonin. Cysteines 349 and 353 form a disulfide. The Extracellular portion of the chain corresponds to 349 to 356; that stretch reads CKESCNEN. A helical membrane pass occupies residues 357–382; that stretch reads VIGALLNVFVWIGYLSSAVNPLVYTL. The NPxxY motif; important for ligand-induced conformation changes and signaling motif lies at 376 to 380; that stretch reads NPLVY. Residues 383–471 are Cytoplasmic-facing; sequence FNKTYRSAFS…ETVNEKVSCV (89 aa). The PDZ-binding signature appears at 469–471; the sequence is SCV.

The protein belongs to the G-protein coupled receptor 1 family. In terms of assembly, interacts (via C-terminus) with MPDZ and PATJ. May interact (via C-terminus) with MPP3, PRDX6, DLG4, DLG1, CASK, APBA1 and MAGI2. Interacts with GRM2 and DRD2; this may affect signaling. In terms of tissue distribution, detected in neurons in brain cortex. Detected in adult intestine, especially in mucosal epithelium, longitudinal and circular layers of muscularis externa and myenteric plexuses. Highly expressed in Paneth cells, and detected at lower levels in enterocytes (at protein level). Detected in neurons in the brain cortex.

It localises to the cell membrane. Its subcellular location is the cell projection. The protein resides in the dendrite. It is found in the axon. The protein localises to the cytoplasmic vesicle. It localises to the membrane. Its subcellular location is the caveola. The protein resides in the presynapse. G-protein coupled receptor activity is regulated by lipids: oleamide increases HTR2A-mediated activity. Functionally, G-protein coupled receptor for 5-hydroxytryptamine (serotonin). Also functions as a receptor for various drugs and psychoactive substances, including mescaline, psilocybin, 1-(2,5-dimethoxy-4-iodophenyl)-2-aminopropane (DOI) and lysergic acid diethylamide (LSD). Ligand binding causes a conformation change that triggers signaling via guanine nucleotide-binding proteins (G proteins) and modulates the activity of downstream effectors. HTR2A is coupled to G(q)/G(11) G alpha proteins and activates phospholipase C-beta, releasing diacylglycerol (DAG) and inositol 1,4,5-trisphosphate (IP3) second messengers that modulate the activity of phosphatidylinositol 3-kinase and promote the release of Ca(2+) ions from intracellular stores, respectively. Beta-arrestin family members inhibit signaling via G proteins and mediate activation of alternative signaling pathways. Affects neural activity, perception, cognition and mood. Plays a role in the regulation of behavior, including responses to anxiogenic situations and psychoactive substances. Plays a role in intestinal smooth muscle contraction, and may play a role in arterial vasoconstriction. The polypeptide is 5-hydroxytryptamine receptor 2A (Htr2a) (Mus musculus (Mouse)).